A 207-amino-acid chain; its full sequence is Urease accessory protein UreG (207 aa).

A GTP-binding site is contributed by 16 to 23; the sequence is GPVGSGKT.

Belongs to the SIMIBI class G3E GTPase family. UreG subfamily. As to quaternary structure, homodimer. UreD, UreF and UreG form a complex that acts as a GTP-hydrolysis-dependent molecular chaperone, activating the urease apoprotein by helping to assemble the nickel containing metallocenter of UreC. The UreE protein probably delivers the nickel.

It localises to the cytoplasm. In terms of biological role, facilitates the functional incorporation of the urease nickel metallocenter. This process requires GTP hydrolysis, probably effectuated by UreG. The polypeptide is Urease accessory protein UreG (Shewanella halifaxensis (strain HAW-EB4)).